The following is a 718-amino-acid chain: Scarecrow-like protein 9 (718 aa).

Positions 305-338 (VEKKKASDAQGGKRRARGRGRGRGRGGGGGQNGK) are disordered. The span at 316-328 (GKRRARGRGRGRG) shows a compositional bias: basic residues. The region spanning 335 to 713 (QNGKKEVVDL…RTVMALSVWK (379 aa)) is the GRAS domain. The interval 342-402 (VDLRSLLIHC…EARLAGTGSQ (61 aa)) is leucine repeat I (LRI). Positions 421–484 (HQLFLACCPF…YGSPKVRITG (64 aa)) are VHIID. Positions 452–456 (VHVID) match the VHIID motif. A leucine repeat II (LRII) region spans residues 500 to 532 (ETGQRLAAYAKLFGVPFEYKAIAKKWDAIQLED). The tract at residues 541-635 (TVVNCLYRAE…MEVFGREALN (95 aa)) is PFYRE. Residues 638–713 (ACEGWERVER…RTVMALSVWK (76 aa)) form an SAW region.

Belongs to the GRAS family. In terms of tissue distribution, expressed in cotyledons, leaves and flowers, and in the elongation zone in root.

The protein localises to the nucleus. Functionally, probable transcription factor involved in plant development. This Arabidopsis thaliana (Mouse-ear cress) protein is Scarecrow-like protein 9 (SCL9).